We begin with the raw amino-acid sequence, 181 residues long: Large ribosomal subunit protein uL5 (181 aa).

The protein belongs to the universal ribosomal protein uL5 family. In terms of assembly, part of the 50S ribosomal subunit; part of the 5S rRNA/L5/L18/L25 subcomplex. Contacts the 5S rRNA and the P site tRNA. Forms a bridge to the 30S subunit in the 70S ribosome.

This is one of the proteins that bind and probably mediate the attachment of the 5S RNA into the large ribosomal subunit, where it forms part of the central protuberance. In the 70S ribosome it contacts protein S13 of the 30S subunit (bridge B1b), connecting the 2 subunits; this bridge is implicated in subunit movement. Contacts the P site tRNA; the 5S rRNA and some of its associated proteins might help stabilize positioning of ribosome-bound tRNAs. In Desulforamulus reducens (strain ATCC BAA-1160 / DSM 100696 / MI-1) (Desulfotomaculum reducens), this protein is Large ribosomal subunit protein uL5.